Consider the following 818-residue polypeptide: Piwi-like protein (818 aa).

One can recognise a PAZ domain in the interval 220–339 (RINRVLNDNS…ITGELCFLCG (120 aa)). One can recognise a Piwi domain in the interval 501 to 800 (KIALVFVPDD…LAELIGKVHK (300 aa)).

Belongs to the argonaute family. Piwi subfamily.

The sequence is that of Piwi-like protein (iwi) from Dugesia japonica (Planarian).